A 195-amino-acid polypeptide reads, in one-letter code: Probable thymidylate kinase (195 aa).

Position 7–14 (7–14 (GIDGVGKT)) interacts with ATP.

Belongs to the thymidylate kinase family.

The catalysed reaction is dTMP + ATP = dTDP + ADP. The protein is Probable thymidylate kinase of Methanosphaera stadtmanae (strain ATCC 43021 / DSM 3091 / JCM 11832 / MCB-3).